Consider the following 899-residue polypeptide: AP-3 complex subunit delta (899 aa).

HEAT repeat units lie at residues 37–74 (QSPE…KLTY), 155–192 (ELAR…QYPE), 194–229 (LRDN…HNPQ), 231–267 (FIQL…IEPK), 268–305 (LRVK…LNSD), 308–344 (DSAV…KINT), 345–382 (DFIA…EDNL), 384–428 (DFVQ…ITAM), 480–518 (RTLA…LLDN), 536–580 (ELQQ…LIIS), 590–613 (SEAL…SLPL), and 614–656 (LLTE…TESE). Disordered regions lie at residues 668–701 (DGIV…PTHE), 741–768 (NLSN…KKKK), 782–801 (GVNT…SARN), and 849–899 (AAEE…LTTE). The segment covering 743-759 (SNSKPSSSGSLVRLSSE) has biased composition (low complexity). Positions 841–862 (QRLLDESAAAEEEVVVVKKKKR) form a coiled coil. Positions 857–880 (VKKKKRSKDGSKSSKKKSRSKSKP) are enriched in basic residues.

It belongs to the adaptor complexes large subunit family. Adaptor protein complex 3 (AP-3) is a heterotetramer composed of 2 large adaptins (APL5 and APL6), a medium adaptin (APM3) and a small adaptin (APS3).

Its subcellular location is the golgi apparatus. The protein resides in the cytoplasmic vesicle. The protein localises to the clathrin-coated vesicle membrane. Part of the AP-3 complex, an adaptor-related complex which is not clathrin-associated. The complex is associated with the Golgi region as well as more peripheral structures. It facilitates the budding of vesicles from the Golgi membrane and may be directly involved in trafficking to the vacuole. In Eremothecium gossypii (strain ATCC 10895 / CBS 109.51 / FGSC 9923 / NRRL Y-1056) (Yeast), this protein is AP-3 complex subunit delta (APL5).